The primary structure comprises 949 residues: Insulin receptor substrate 1 (949 aa).

One can recognise a PH domain in the interval 8–109 (GMALSGYLKK…WLDKLLVLQR (102 aa)). Residues 122–236 (YDQVWQVVIQ…SAMSAKTESN (115 aa)) form the IRS-type PTB domain. The tract at residues 247 to 270 (PDLSHEPMRKRSSSANEASKPINV) is disordered. Phosphoserine occurs at positions 286, 287, and 342. The span at 304–345 (RNGTLSESSNQTYFGSNHGLRSNTISGNRPHSTNKHSNSPTF) shows a compositional bias: polar residues. Residues 304–373 (RNGTLSESSN…SDDNGSYSHY (70 aa)) are disordered. Y410 is modified (phosphotyrosine; by INSR). The short motif at 410-413 (YIPM) is the YXXM motif 1 element. A disordered region spans residues 530–556 (RSQSSITKEGSGYGTSGNRQKKSTSAP). S554 is modified (phosphoserine). A YXXM motif 2 motif is present at residues 640 to 643 (YLEM). Over residues 696 to 706 (REQTTSEEKKS) the composition is skewed to basic and acidic residues. A disordered region spans residues 696-718 (REQTTSEEKKSNSPLNEKPFSLK). The residue at position 892 (Y892) is a Phosphotyrosine; by INSR. Residues 906–949 (AKYLKRGSRESPPVSACPEDGNTYAKIDFDQSDSSSSSSNIFNT) form a disordered region. S913 and S916 each carry phosphoserine. Position 929 is a phosphotyrosine; by INSR (Y929). The span at 937–949 (SDSSSSSSNIFNT) shows a compositional bias: low complexity.

In terms of assembly, bindings to phosphatidylinositol 3-kinase and SHP2.

Its function is as follows. Activates phosphatidylinositol 3-kinase when bound to the regulatory p85 subunit. May mediate the control of various cellular processes by insulin-like peptides. When phosphorylated by the insulin receptor binds specifically to various cellular proteins containing SH2 domains. Involved in control of cell proliferation, cell size, and body and organ growth throughout development. Also has a role in a signaling pathway controlling the physiological response required to endure periods of low nutrient conditions. Insulin/insulin-like growth factor (IGF) signaling pathway has a role in regulating aging and is necessary in the ovary for vitellogenic maturation. The sequence is that of Insulin receptor substrate 1 from Drosophila yakuba (Fruit fly).